A 203-amino-acid chain; its full sequence is Translation initiation factor IF-3 (203 aa).

The interval 168–203 (QLSPKKKESATKKPATPKPATPAAVKAEKPAGDNEE) is disordered. A compositionally biased stretch (basic and acidic residues) spans 193-203 (KAEKPAGDNEE).

The protein belongs to the IF-3 family. In terms of assembly, monomer.

The protein resides in the cytoplasm. IF-3 binds to the 30S ribosomal subunit and shifts the equilibrium between 70S ribosomes and their 50S and 30S subunits in favor of the free subunits, thus enhancing the availability of 30S subunits on which protein synthesis initiation begins. This chain is Translation initiation factor IF-3, found in Bacteroides fragilis (strain ATCC 25285 / DSM 2151 / CCUG 4856 / JCM 11019 / LMG 10263 / NCTC 9343 / Onslow / VPI 2553 / EN-2).